Consider the following 93-residue polypeptide: UPF0728 protein C10orf53 homolog (93 aa).

This sequence belongs to the UPF0728 family.

The polypeptide is UPF0728 protein C10orf53 homolog (Xenopus tropicalis (Western clawed frog)).